Reading from the N-terminus, the 148-residue chain is Small ribosomal subunit protein uS7c (148 aa).

Belongs to the universal ribosomal protein uS7 family. Part of the 30S ribosomal subunit.

It localises to the plastid. It is found in the chloroplast. One of the primary rRNA binding proteins, it binds directly to 16S rRNA where it nucleates assembly of the head domain of the 30S subunit. This chain is Small ribosomal subunit protein uS7c (rps7), found in Cyanidioschyzon merolae (strain NIES-3377 / 10D) (Unicellular red alga).